We begin with the raw amino-acid sequence, 149 residues long: Transcriptional repressor NrdR (149 aa).

The segment at 3–34 is a zinc-finger region; it reads CPFCGFEESKVVDSRSTDDNTTIRRRRECLKC. In terms of domain architecture, ATP-cone spans 49–139; sequence ILVIKKDLTR…VYRQFKDIDT (91 aa).

This sequence belongs to the NrdR family. The cofactor is Zn(2+).

In terms of biological role, negatively regulates transcription of bacterial ribonucleotide reductase nrd genes and operons by binding to NrdR-boxes. The protein is Transcriptional repressor NrdR of Clostridium beijerinckii (strain ATCC 51743 / NCIMB 8052) (Clostridium acetobutylicum).